Reading from the N-terminus, the 373-residue chain is Indole glucosinolate O-methyltransferase 3 (373 aa).

Residues G217, D240, D260, M261, and K274 each contribute to the S-adenosyl-L-homocysteine site. Catalysis depends on H278, which acts as the Proton acceptor.

Belongs to the class I-like SAM-binding methyltransferase superfamily. Cation-independent O-methyltransferase family.

It functions in the pathway secondary metabolite biosynthesis. Involved in indole glucosinolate biosynthesis. Catalyzes methoxylation reactions of the glucosinolate indole ring. Converts the hydroxy intermediates 4-hydroxy-indol-3-yl-methylglucosinolate (4OH-I3M) and 1-hydroxy-indol-3-yl-methylglucosinolate (1OH-I3M) to 4-methoxy-indol-3-yl-methylglucosinolate (4MO-I3M) and 1-methoxy-indol-3-yl-methylglucosinolate(1MO-I3M), respectively. The protein is Indole glucosinolate O-methyltransferase 3 of Arabidopsis thaliana (Mouse-ear cress).